The sequence spans 918 residues: Protein translocase subunit SecA (918 aa).

Residues Q87, G105–T109, and D494 each bind ATP. The segment covering K863 to V883 has biased composition (basic and acidic residues). Residues K863–K918 form a disordered region.

This sequence belongs to the SecA family. As to quaternary structure, monomer and homodimer. Part of the essential Sec protein translocation apparatus which comprises SecA, SecYEG and auxiliary proteins SecDF. Other proteins may also be involved.

It localises to the cell inner membrane. The protein resides in the cytoplasm. It carries out the reaction ATP + H2O + cellular proteinSide 1 = ADP + phosphate + cellular proteinSide 2.. Its function is as follows. Part of the Sec protein translocase complex. Interacts with the SecYEG preprotein conducting channel. Has a central role in coupling the hydrolysis of ATP to the transfer of proteins into and across the cell membrane, serving as an ATP-driven molecular motor driving the stepwise translocation of polypeptide chains across the membrane. The polypeptide is Protein translocase subunit SecA (Leptospira biflexa serovar Patoc (strain Patoc 1 / Ames)).